Consider the following 351-residue polypeptide: Cell division protein FtsZ (351 aa).

GTP is bound by residues 31 to 35, 118 to 120, glutamate 149, arginine 153, and aspartate 197; these read GAGNN and GTG.

The protein belongs to the FtsZ family. As to quaternary structure, homodimer. Polymerizes to form a dynamic ring structure in a strictly GTP-dependent manner. Interacts directly with several other division proteins. Interacts with FtsA.

Its subcellular location is the cytoplasm. In terms of biological role, essential cell division protein that forms a contractile ring structure (Z ring) at the future cell division site. The regulation of the ring assembly controls the timing and the location of cell division. One of the functions of the FtsZ ring is to recruit other cell division proteins to the septum to produce a new cell wall between the dividing cells. Binds GTP and shows GTPase activity. This Thermotoga maritima (strain ATCC 43589 / DSM 3109 / JCM 10099 / NBRC 100826 / MSB8) protein is Cell division protein FtsZ.